Here is a 763-residue protein sequence, read N- to C-terminus: Endothelin-converting enzyme 2 (763 aa).

The Cytoplasmic segment spans residues 1 to 60; that stretch reads MNVALHELGGGGSMVEYKRAKLRDEESPEITVEGRATRDSLEVGFQKRTRQLFGSHTQLE. S27 is modified (phosphoserine). A helical; Signal-anchor for type II membrane protein transmembrane segment spans residues 61–81; sequence LVLAGLILVLAALLLGCLVAL. Over 82 to 763 the chain is Lumenal; that stretch reads WVHRDPAHST…MNPGQLCEVW (682 aa). Residues 91–763 form the Peptidase M13 domain; sequence TCVTEACIRV…MNPGQLCEVW (673 aa). 5 disulfides stabilise this stretch: C92-C97, C115-C748, C123-C708, C179-C428, and C637-C760. N-linked (GlcNAc...) asparagine glycans are attached at residues N159, N163, N204, N264, N309, N376, and N532. Position 600 (H600) interacts with Zn(2+). Residue E601 is part of the active site. H604 lines the Zn(2+) pocket. 2 N-linked (GlcNAc...) asparagine glycosylation sites follow: N625 and N633. E660 contributes to the Zn(2+) binding site. The Proton donor role is filled by D664.

This sequence belongs to the peptidase M13 family. Zn(2+) is required as a cofactor.

The protein localises to the golgi apparatus membrane. The protein resides in the cytoplasmic vesicle. It is found in the secretory vesicle membrane. The enzyme catalyses Hydrolysis of the 21-Trp-|-Val-22 bond in big endothelin to form endothelin 1.. In terms of biological role, converts big endothelin-1 to endothelin-1. Also involved in the processing of various neuroendocrine peptides, including neurotensin, angiotensin I, substance P, proenkephalin-derived peptides, and prodynorphin-derived peptides. May play a role in amyloid-beta processing. The chain is Endothelin-converting enzyme 2 from Mus musculus (Mouse).